A 140-amino-acid polypeptide reads, in one-letter code: Histone H2B (140 aa).

A disordered region spans residues 1–47 (MPPKAQKTPTTGGKAPAGKAPVEKKEAGKKTAAPSGEKKKRTKTRKE). Lys-7 carries the post-translational modification N6-acetyllysine; alternate. Residue Lys-7 forms a Glycyl lysine isopeptide (Lys-Gly) (interchain with G-Cter in SUMO); alternate linkage. Lys-14 is modified (N6-acetyllysine). Lys-24 carries the N6-acetyllysine; alternate modification. Residue Lys-24 forms a Glycyl lysine isopeptide (Lys-Gly) (interchain with G-Cter in SUMO); alternate linkage. A Glycyl lysine isopeptide (Lys-Gly) (interchain with G-Cter in SUMO) cross-link involves residue Lys-25. A Glycyl lysine isopeptide (Lys-Gly) (interchain with G-Cter in ubiquitin) cross-link involves residue Lys-134.

The protein belongs to the histone H2B family. As to quaternary structure, the nucleosome is a histone octamer containing two molecules each of H2A, H2B, H3 and H4 assembled in one H3-H4 heterotetramer and two H2A-H2B heterodimers. The octamer wraps approximately 147 bp of DNA. Post-translationally, monoubiquitinated by BRE1 to form H2BK123ub1. H2BK123ub1 gives a specific tag for epigenetic transcriptional activation and is also prerequisite for H3K4me and H3K79me formation. H2BK123ub1 also modulates the formation of double-strand breaks during meiosis and is a prerequisite for DNA-damage checkpoint activation. Acetylated by GCN5 to form H2BK11ac and H2BK16ac. H2BK16ac can also be formed by ESA1. Acetylation of N-terminal lysines and particularly formation of H2BK11acK16ac has a positive effect on transcription. In terms of processing, sumoylation to form H2BK6su and probably also H2BK16su or H2BK17su, occurs preferentially near the telomeres and represses gene transcription.

It is found in the nucleus. Its subcellular location is the chromosome. Functionally, core component of nucleosome. Nucleosomes wrap and compact DNA into chromatin, limiting DNA accessibility to the cellular machineries which require DNA as a template. Histones thereby play a central role in transcription regulation, DNA repair, DNA replication and chromosomal stability. DNA accessibility is regulated via a complex set of post-translational modifications of histones, also called histone code, and nucleosome remodeling. In Phaeosphaeria nodorum (strain SN15 / ATCC MYA-4574 / FGSC 10173) (Glume blotch fungus), this protein is Histone H2B (HTB1).